The chain runs to 76 residues: MSIEERVKKIIVEQLGVKEDDVKPEASFIEDLGADSLDTVELVMALEEEFDIEIPDEEAEKITTVQSAIDYVQNNQ.

Residues 1-76 (MSIEERVKKI…SAIDYVQNNQ (76 aa)) enclose the Carrier domain. Position 36 is an O-(pantetheine 4'-phosphoryl)serine (Ser36).

Belongs to the acyl carrier protein (ACP) family. In terms of processing, 4'-phosphopantetheine is transferred from CoA to a specific serine of apo-ACP by AcpS. This modification is essential for activity because fatty acids are bound in thioester linkage to the sulfhydryl of the prosthetic group.

It localises to the cytoplasm. The protein operates within lipid metabolism; fatty acid biosynthesis. In terms of biological role, carrier of the growing fatty acid chain in fatty acid biosynthesis. The chain is Acyl carrier protein from Histophilus somni (strain 129Pt) (Haemophilus somnus).